Consider the following 76-residue polypeptide: Sec-independent protein translocase protein TatA (76 aa).

The chain crosses the membrane as a helical span at residues 1–21 (MGSFSIWHWLIVLVIVMLVFG). Composition is skewed to basic and acidic residues over residues 41–50 (DGMKDGEDKG) and 57–76 (KELR…SRQQ). A disordered region spans residues 41–76 (DGMKDGEDKGAQPAASKELRDSTTIDVDAKEKSRQQ).

Belongs to the TatA/E family. The Tat system comprises two distinct complexes: a TatABC complex, containing multiple copies of TatA, TatB and TatC subunits, and a separate TatA complex, containing only TatA subunits. Substrates initially bind to the TatABC complex, which probably triggers association of the separate TatA complex to form the active translocon.

The protein resides in the cell inner membrane. Part of the twin-arginine translocation (Tat) system that transports large folded proteins containing a characteristic twin-arginine motif in their signal peptide across membranes. TatA could form the protein-conducting channel of the Tat system. This chain is Sec-independent protein translocase protein TatA, found in Cupriavidus taiwanensis (strain DSM 17343 / BCRC 17206 / CCUG 44338 / CIP 107171 / LMG 19424 / R1) (Ralstonia taiwanensis (strain LMG 19424)).